The primary structure comprises 276 residues: Energy-coupling factor transporter ATP-binding protein EcfA1 (276 aa).

One can recognise an ABC transporter domain in the interval 2-237 (IEIKNLKFKY…GSELVDLGLD (236 aa)). 37–44 (GHNGSGKS) contributes to the ATP binding site.

It belongs to the ABC transporter superfamily. Energy-coupling factor EcfA family. In terms of assembly, forms a stable energy-coupling factor (ECF) transporter complex composed of 2 membrane-embedded substrate-binding proteins (S component), 2 ATP-binding proteins (A component) and 2 transmembrane proteins (T component).

The protein resides in the cell membrane. Functionally, ATP-binding (A) component of a common energy-coupling factor (ECF) ABC-transporter complex. Unlike classic ABC transporters this ECF transporter provides the energy necessary to transport a number of different substrates. The polypeptide is Energy-coupling factor transporter ATP-binding protein EcfA1 (Streptococcus thermophilus (strain ATCC BAA-491 / LMD-9)).